A 217-amino-acid chain; its full sequence is Chaperone protein TorD (217 aa).

The protein belongs to the TorD/DmsD family. TorD subfamily.

Its subcellular location is the cytoplasm. Involved in the biogenesis of TorA. Acts on TorA before the insertion of the molybdenum cofactor and, as a result, probably favors a conformation of the apoenzyme that is competent for acquiring the cofactor. The sequence is that of Chaperone protein TorD from Shewanella oneidensis (strain ATCC 700550 / JCM 31522 / CIP 106686 / LMG 19005 / NCIMB 14063 / MR-1).